Consider the following 293-residue polypeptide: Cep170-like protein (293 aa).

Disordered regions lie at residues 78–110 (PPLV…LTIT) and 217–270 (FPSA…AESE). Residues 227 to 245 (KQKSSPVNNHHSPGQTPTL) show a composition bias toward polar residues.

It belongs to the CEP170 family.

In Homo sapiens (Human), this protein is Cep170-like protein (CEP170P1).